Here is a 293-residue protein sequence, read N- to C-terminus: Elongation factor Ts (293 aa).

Residues 79–82 (TDFV) are involved in Mg(2+) ion dislocation from EF-Tu.

The protein belongs to the EF-Ts family.

The protein localises to the cytoplasm. Functionally, associates with the EF-Tu.GDP complex and induces the exchange of GDP to GTP. It remains bound to the aminoacyl-tRNA.EF-Tu.GTP complex up to the GTP hydrolysis stage on the ribosome. The protein is Elongation factor Ts of Bacillus pumilus (strain SAFR-032).